Reading from the N-terminus, the 139-residue chain is Large ribosomal subunit protein eL32 (139 aa).

The protein belongs to the eukaryotic ribosomal protein eL32 family.

This chain is Large ribosomal subunit protein eL32 (RPL32), found in Encephalitozoon cuniculi (strain GB-M1) (Microsporidian parasite).